Consider the following 217-residue polypeptide: Glycosylphosphatidylinositol anchor biosynthesis protein 11 (217 aa).

The next 2 helical transmembrane spans lie at 45–65 (TWLTIPWHLIALVYIYVKVFN) and 68–88 (NTAELLACLVPLQILYTIFQF). A glycan (N-linked (GlcNAc...) asparagine) is linked at N102. Transmembrane regions (helical) follow at residues 107 to 127 (AISILACIVLSIPVVVIIILF), 134 to 154 (LLWETWLLALHCSFLAYPAVY), 169 to 189 (YFILIVVGCWISCVVIPLDWD), and 197 to 217 (IPIVIGAYLGAFVGFAYGAYL).

It belongs to the PIGF family.

It localises to the endoplasmic reticulum membrane. Its pathway is glycolipid biosynthesis; glycosylphosphatidylinositol-anchor biosynthesis. Its function is as follows. Acts in the GPI biosynthetic pathway between GlcNAc-PI synthesis and GPI transfer to protein. The chain is Glycosylphosphatidylinositol anchor biosynthesis protein 11 (GPI11) from Candida glabrata (strain ATCC 2001 / BCRC 20586 / JCM 3761 / NBRC 0622 / NRRL Y-65 / CBS 138) (Yeast).